Here is a 354-residue protein sequence, read N- to C-terminus: Small ribosomal subunit biogenesis GTPase RsgA 1 (354 aa).

Residues 1–24 (MAKKKKLTKGQVRRVRSNQQKRLK) are compositionally biased toward basic residues. The tract at residues 1 to 28 (MAKKKKLTKGQVRRVRSNQQKRLKKQEE) is disordered. The CP-type G domain maps to 113 to 274 (YDGLKPVAAN…LIDSPGVREF (162 aa)). Residues 160–163 (NKVD) and 214–222 (GQSGVGKSS) contribute to the GTP site. Zn(2+)-binding residues include Cys298, Cys303, His305, and Cys311.

This sequence belongs to the TRAFAC class YlqF/YawG GTPase family. RsgA subfamily. As to quaternary structure, monomer. Associates with 30S ribosomal subunit, binds 16S rRNA. Zn(2+) serves as cofactor.

The protein localises to the cytoplasm. In terms of biological role, one of several proteins that assist in the late maturation steps of the functional core of the 30S ribosomal subunit. Helps release RbfA from mature subunits. May play a role in the assembly of ribosomal proteins into the subunit. Circularly permuted GTPase that catalyzes slow GTP hydrolysis, GTPase activity is stimulated by the 30S ribosomal subunit. The chain is Small ribosomal subunit biogenesis GTPase RsgA 1 from Vibrio parahaemolyticus serotype O3:K6 (strain RIMD 2210633).